The primary structure comprises 382 residues: Mannitol-1-phosphate 5-dehydrogenase (382 aa).

3–14 (ALHFGAGNIGRG) lines the NAD(+) pocket.

It belongs to the mannitol dehydrogenase family.

It catalyses the reaction D-mannitol 1-phosphate + NAD(+) = beta-D-fructose 6-phosphate + NADH + H(+). The sequence is that of Mannitol-1-phosphate 5-dehydrogenase from Salmonella schwarzengrund (strain CVM19633).